The primary structure comprises 230 residues: MVPEYSRFYNILGYNFKDYTLLIRALTHRSKTKKNYERLEFLGDSVLSFVIAEVLYKQFTDLAEGKLSQLRSKLVKGTTLAQLASSLKMDEYIILGASEQGGHKREKILEDVFEAVIGAIYLDSDFATVKKVILKWYQPIISSINLDTIKVKDSKSKLQEILLQNALSLPEYSIETIDGKDHEQQFTVVAMSKDLNLRVKAQGTSRKKAEQKAAEKMIEMLSQQGLHEKK.

The RNase III domain maps to 5-125 (YSRFYNILGY…VIGAIYLDSD (121 aa)). Glu40 serves as a coordination point for Mg(2+). The active site involves Asp44. 2 residues coordinate Mg(2+): Asp111 and Glu114. Residue Glu114 is part of the active site. One can recognise a DRBM domain in the interval 153–223 (DSKSKLQEIL…AEKMIEMLSQ (71 aa)).

The protein belongs to the ribonuclease III family. In terms of assembly, homodimer. Mg(2+) is required as a cofactor.

Its subcellular location is the cytoplasm. The catalysed reaction is Endonucleolytic cleavage to 5'-phosphomonoester.. Its function is as follows. Digests double-stranded RNA. Involved in the processing of primary rRNA transcript to yield the immediate precursors to the large and small rRNAs (23S and 16S). Also processes some mRNAs, and tRNAs when they are encoded in the rRNA operon. CRISPR (clustered regularly interspaced short palindromic repeat) is an adaptive immune system that provides protection against mobile genetic elements (viruses, transposable elements and conjugative plasmids). CRISPR clusters contain spacers, sequences complementary to antecedent mobile elements, and target invading nucleic acids. CRISPR clusters are transcribed and processed into CRISPR RNA (crRNA). In this organism endogenous ribonuclease 3 and Cas9 are required for correct coprocessing of pre-crRNA and the trans-encoded small RNA (tracrRNA). Cas9, crRNA and tracrRNA are required for cleavage of invading DNA. Complements pre-crRNA and tracrRNA coprocessing defects in an rnc deletion in S.pyogenes strain 370. The protein is Ribonuclease 3 of Francisella tularensis subsp. novicida (strain U112).